The following is a 393-amino-acid chain: Protein TsgA (393 aa).

The Cytoplasmic segment spans residues 1-10 (MTNSNRIKLT). The helical transmembrane segment at 11–31 (WISFLSYALTGALVIVTGMVM) threads the bilayer. Residues 32–50 (GNIADYFHLPVSSMSNTFT) are Periplasmic-facing. The chain crosses the membrane as a helical span at residues 51-71 (FLNAGILISIFLNAWLMEIVP). At 72 to 77 (LKTQLR) the chain is on the cytoplasmic side. The helical transmembrane segment at 78 to 98 (FGFILMVLAVAGLMFSHSLAL) threads the bilayer. At 99–100 (FS) the chain is on the periplasmic side. A helical membrane pass occupies residues 101 to 121 (AAMFVLGLVSGITMSIGTFLI). The Cytoplasmic portion of the chain corresponds to 122-133 (TQLYEGRQRGSR). The chain crosses the membrane as a helical span at residues 134-154 (LLFTDSFFSMAGMIFPMVAAF). At 155–161 (LLARSIE) the chain is on the periplasmic side. Residues 162–182 (WYWVYACIGLVYLAIFILTFG) traverse the membrane as a helical segment. Topologically, residues 183–205 (CEFPALGKHAQHSQAPVVKEKWG) are cytoplasmic. A helical membrane pass occupies residues 206-226 (IGVLFLAVAALCYILGQLGFI). The Periplasmic segment spans residues 227 to 244 (SWVPEYAKGLGMSLNDAG). A helical membrane pass occupies residues 245 to 265 (ALVSDFWMSYMFGMWAFSFIL). Residues 266-272 (RFFDLQR) are Cytoplasmic-facing. Residues 273-293 (ILTVLAGMAAVLMYLFITGTQ) form a helical membrane-spanning segment. Topologically, residues 294–297 (AHMP) are periplasmic. A helical transmembrane segment spans residues 298 to 318 (WFILTLGFFSSAIYTSIITLG). Residues 319–331 (SQQTKVASPKLVN) lie on the Cytoplasmic side of the membrane. Residues 332-352 (FILTCGTIGTMLTFVVTGPIV) form a helical membrane-spanning segment. Residues 353 to 360 (AHSGPQAA) are Periplasmic-facing. A helical membrane pass occupies residues 361-381 (LLTANGLYAVVFVMCFALGFV). The Cytoplasmic segment spans residues 382–393 (SRHRQHSSPAAH).

The protein belongs to the major facilitator superfamily. TsgA family.

The protein resides in the cell inner membrane. The chain is Protein TsgA from Salmonella paratyphi A (strain ATCC 9150 / SARB42).